The sequence spans 384 residues: MLSINTTRKENELSGNLGKMKITEENKPKKVLGEITNFQRSTQKTPLKQEIKPVVKKSQQVEPLLADNPRRFVVLPIQYHDIWKMYKKAEASFWTAEEVDLSKDMAHWESLKKEEKHFISHVLAFFAASDGIVNENLVERFSKEVQVTEARCFYGFQIAMENIHSEMYSLLIDTYIKDPQERDFLFNAIETMPCVKEKADWAMRWINDDSSSYAERVVAFAAVEGIFFSGSFASIFWLKKRGIMPGLTFSNELISRDEGLHCDFACLMFSHLVNKPSQERIHQIIDEAVKIEQVFLTEALPCRLIGMNCDLMRQYIEFVADRLLLELKCDKLYNKENPFDFMEHISLEGKTNFFEKRVGEYQKMGVMSGGNTGDSHAFTLDADF.

Fe cation is bound by residues Asp-130, Glu-161, and His-164. Tyr-168 is a catalytic residue. Fe cation-binding residues include Glu-224, Glu-258, and His-261.

The protein belongs to the ribonucleoside diphosphate reductase small chain family. Heterodimer of a large and a small subunit. Fe cation serves as cofactor.

It catalyses the reaction a 2'-deoxyribonucleoside 5'-diphosphate + [thioredoxin]-disulfide + H2O = a ribonucleoside 5'-diphosphate + [thioredoxin]-dithiol. Functionally, provides the precursors necessary for DNA synthesis. Catalyzes the biosynthesis of deoxyribonucleotides from the corresponding ribonucleotides. The protein is Ribonucleoside-diphosphate reductase small chain of Spisula solidissima (Atlantic surf-clam).